A 459-amino-acid chain; its full sequence is Nuclear distribution protein nudF 1 (459 aa).

The region spanning 9–41 is the LisH domain; that stretch reads QAEELHKSIIAYLSANNLSNAASALRGELGLSE. A coiled-coil region spans residues 61-88; it reads TSIVRLQKKIMDLEARCGALQTELNNAT. WD repeat units follow at residues 114–155, 157–197, 201–240, 243–282, 288–349, 351–390, 395–440, and 442–459; these read SHRN…TTLK, HTRA…KNIR, GHEH…CVKT, GHSG…NPEA, GHDH…LMTL, GHDN…KCVK, AHGR…PQVQ, and RCVV…IFAN.

This sequence belongs to the WD repeat LIS1/nudF family. In terms of assembly, self-associates. Interacts with nudE and dynein.

Its subcellular location is the cytoplasm. The protein localises to the cytoskeleton. It is found in the spindle pole. Its function is as follows. Positively regulates the activity of the minus-end directed microtubule motor protein dynein. May enhance dynein-mediated microtubule sliding by targeting dynein to the microtubule plus end. Required for nuclear migration during vegetative growth as well as development. Required for retrograde early endosome (EE) transport from the hyphal tip. Required for localization of dynein to the mitotic spindle poles. Recruits additional proteins to the dynein complex at SPBs. The protein is Nuclear distribution protein nudF 1 of Talaromyces marneffei (strain ATCC 18224 / CBS 334.59 / QM 7333) (Penicillium marneffei).